A 414-amino-acid chain; its full sequence is Enolase (414 aa).

Q162 is a (2R)-2-phosphoglycerate binding site. Residue E204 is the Proton donor of the active site. Residues D239, E280, and D307 each coordinate Mg(2+). (2R)-2-phosphoglycerate contacts are provided by K332, R361, S362, and K383. The active-site Proton acceptor is the K332.

The protein belongs to the enolase family. Mg(2+) is required as a cofactor.

Its subcellular location is the cytoplasm. It is found in the secreted. It localises to the cell surface. It carries out the reaction (2R)-2-phosphoglycerate = phosphoenolpyruvate + H2O. Its pathway is carbohydrate degradation; glycolysis; pyruvate from D-glyceraldehyde 3-phosphate: step 4/5. In terms of biological role, catalyzes the reversible conversion of 2-phosphoglycerate (2-PG) into phosphoenolpyruvate (PEP). It is essential for the degradation of carbohydrates via glycolysis. The sequence is that of Enolase from Campylobacter jejuni (strain RM1221).